Here is a 263-residue protein sequence, read N- to C-terminus: Endonuclease 8 (263 aa).

The active-site Schiff-base intermediate with DNA is the P2. The Proton donor role is filled by E3. Residue K53 is the Proton donor; for beta-elimination activity of the active site. Q70, R125, and N169 together coordinate DNA. The FPG-type zinc-finger motif lies at 229–263; that stretch reads KLFHRDGEACERCGGIIEKTTLSSRPFYWCPHCQK. The active-site Proton donor; for delta-elimination activity is R253.

The protein belongs to the FPG family. It depends on Zn(2+) as a cofactor.

The enzyme catalyses 2'-deoxyribonucleotide-(2'-deoxyribose 5'-phosphate)-2'-deoxyribonucleotide-DNA = a 3'-end 2'-deoxyribonucleotide-(2,3-dehydro-2,3-deoxyribose 5'-phosphate)-DNA + a 5'-end 5'-phospho-2'-deoxyribonucleoside-DNA + H(+). Functionally, involved in base excision repair of DNA damaged by oxidation or by mutagenic agents. Acts as a DNA glycosylase that recognizes and removes damaged bases. Has a preference for oxidized pyrimidines, such as thymine glycol, 5,6-dihydrouracil and 5,6-dihydrothymine. Has AP (apurinic/apyrimidinic) lyase activity and introduces nicks in the DNA strand. Cleaves the DNA backbone by beta-delta elimination to generate a single-strand break at the site of the removed base with both 3'- and 5'-phosphates. This Salmonella typhimurium (strain SL1344) protein is Endonuclease 8.